Consider the following 302-residue polypeptide: tRNA dimethylallyltransferase (302 aa).

Position 8 to 15 (8 to 15) interacts with ATP; it reads GSSGSGKS. 10–15 lines the substrate pocket; sequence SGSGKS. Positions 33–36 are interaction with substrate tRNA; that stretch reads DSLS.

The protein belongs to the IPP transferase family. Monomer. Requires Mg(2+) as cofactor.

It catalyses the reaction adenosine(37) in tRNA + dimethylallyl diphosphate = N(6)-dimethylallyladenosine(37) in tRNA + diphosphate. Its function is as follows. Catalyzes the transfer of a dimethylallyl group onto the adenine at position 37 in tRNAs that read codons beginning with uridine, leading to the formation of N6-(dimethylallyl)adenosine (i(6)A). The protein is tRNA dimethylallyltransferase of Helicobacter hepaticus (strain ATCC 51449 / 3B1).